The primary structure comprises 159 residues: ATP synthase subunit b (159 aa).

Residues 7–27 (VIFMTIINFCILVAILKHFFW) traverse the membrane as a helical segment.

Belongs to the ATPase B chain family. F-type ATPases have 2 components, F(1) - the catalytic core - and F(0) - the membrane proton channel. F(1) has five subunits: alpha(3), beta(3), gamma(1), delta(1), epsilon(1). F(0) has three main subunits: a(1), b(2) and c(10-14). The alpha and beta chains form an alternating ring which encloses part of the gamma chain. F(1) is attached to F(0) by a central stalk formed by the gamma and epsilon chains, while a peripheral stalk is formed by the delta and b chains.

The protein localises to the cell membrane. Its function is as follows. F(1)F(0) ATP synthase produces ATP from ADP in the presence of a proton or sodium gradient. F-type ATPases consist of two structural domains, F(1) containing the extramembraneous catalytic core and F(0) containing the membrane proton channel, linked together by a central stalk and a peripheral stalk. During catalysis, ATP synthesis in the catalytic domain of F(1) is coupled via a rotary mechanism of the central stalk subunits to proton translocation. In terms of biological role, component of the F(0) channel, it forms part of the peripheral stalk, linking F(1) to F(0). The chain is ATP synthase subunit b from Clostridium botulinum (strain Alaska E43 / Type E3).